A 122-amino-acid chain; its full sequence is RxLR effector protein Avh52 (122 aa).

The first 21 residues, Met1–Ala21, serve as a signal peptide directing secretion. Positions Arg50–Arg68 match the RxLR-dEER motif. A TAP1-binding region spans residues Ser69–Val86. The segment at Lys87–Lys98 is nuclear localization signal (NLS).

It belongs to the RxLR effector family. Interacts with host acetyl transferase TAP1.

It is found in the secreted. Its subcellular location is the host nucleus. In terms of biological role, effector that suppresses plant defense responses during the early stages of pathogen infection. Suppresses cell death induced by effectors and PAMPs in plant hosts. Interacts with host acetyltransferase TAP1 and causes TAP1 relocation into the nucleus where it acetylates histones H2A and H3 during early infection, thereby promoting susceptibility of host plant to P.sojae. This is RxLR effector protein Avh52 from Phytophthora sojae (Soybean stem and root rot agent).